Consider the following 131-residue polypeptide: Small ribosomal subunit protein bS6 (131 aa).

Residues 96 to 131 (VTEASPMAKAKDERDSRRGPAGDRSYDEANAEEIAE) form a disordered region. Over residues 104–122 (KAKDERDSRRGPAGDRSYD) the composition is skewed to basic and acidic residues.

It belongs to the bacterial ribosomal protein bS6 family.

Its function is as follows. Binds together with bS18 to 16S ribosomal RNA. In Shewanella sp. (strain ANA-3), this protein is Small ribosomal subunit protein bS6.